A 1240-amino-acid polypeptide reads, in one-letter code: Structural polyprotein (1240 aa).

The interval 1–35 (MFPYPTLNYPPMAPINPMAYRDPNPPRQVAPFRPP) is necessary for nucleocapsid assembly and virus assembly. Residues 1–102 (MFPYPTLNYP…RKPKPGKRQR (102 aa)) form a disordered region. The span at 23–34 (PNPPRQVAPFRP) shows a compositional bias: pro residues. Positions 36–69 (LAAQIEDLRRSIANLTLKQRAPNPPAGPPAKRKK) are host transcription inhibition. The Supraphysiological nuclear export signal signature appears at 43 to 50 (LRRSIANL). Asn49 carries N-linked (GlcNAc...) asparagine; by host glycosylation. A compositionally biased stretch (basic residues) spans 65–102 (AKRKKPAPKPKPAQAKKKRPPPPAKKQKRKPKPGKRQR). Residues 66–70 (KRKKP) carry the Nuclear localization signal motif. The tract at residues 82-112 (KRPPPPAKKQKRKPKPGKRQRMCMKLESDKT) is binding to the viral RNA. The ribosome-binding stretch occupies residues 97-111 (PGKRQRMCMKLESDK). A Phosphoserine modification is found at Ser109. Residues 111-260 (KTFPIMLNGQ…KDTPEGSEPW (150 aa)) form the Peptidase S3 domain. Phosphothreonine is present on Thr112. Residues His137, Asp159, and Ser211 each act as charge relay system in the active site. The functions as an uncleaved signal peptide for the precursor of protein E3/E2 stretch occupies residues 261-272 (SLATVMCVLANI). At 261 to 682 (SLATVMCVLA…HEVVVYYYNR (422 aa)) the chain is on the extracellular side. N-linked (GlcNAc...) asparagine; by host glycans are attached at residues Asn271 and Asn638. Residues 683–703 (YPLTTIIGLCTCVAIIMVSCV) traverse the membrane as a helical segment. The Cytoplasmic portion of the chain corresponds to 704–743 (HPCGSFAGLRNLCITPYKLAPNAQVPILLALLCCIKPTRA). S-palmitoyl cysteine; by host attachment occurs at residues Cys706, Cys716, Cys736, and Cys737. The segment at 715–735 (LCITPYKLAPNAQVPILLALL) is transient transmembrane before p62-6K protein processing. Topologically, residues 744–758 (DDTLQVLNYLWNNNQ) are extracellular. Residues 759 to 779 (NFFWMQTLIPLAALIVCMRIV) form a helical membrane-spanning segment. Residue Arg780 is a topological domain, cytoplasmic. Residues 781–801 (CLFCCGPAFLLVCGAWAAAYE) form a helical membrane-spanning segment. The Extracellular portion of the chain corresponds to 802-1216 (HTAVMPNKVG…WSWLKVLVGG (415 aa)). An N-linked (GlcNAc...) asparagine; by host glycan is attached at Asn834. 4 disulfide bridges follow: Cys848–Cys913, Cys861–Cys893, Cys862–Cys895, and Cys867–Cys877. An E1 fusion peptide loop region spans residues 883-900 (VYPFMWGGAYCFCDTENT). A glycan (N-linked (GlcNAc...) asparagine; by host) is linked at Asn933. 3 disulfide bridges follow: Cys1059–Cys1071, Cys1101–Cys1176, and Cys1106–Cys1180. A helical membrane pass occupies residues 1217-1237 (TSAFIVLGLIATAVVALVLFF). Topologically, residues 1238–1240 (HRH) are cytoplasmic.

In terms of assembly, part of a tetrameric complex composed of host CRM1, host importin alpha/beta dimer and the viral capsid; this complex blocks the receptor-mediated transport through the nuclear pore. Interacts with host phosphatase PPP1CA; this interaction dephosphorylates the capsid protein, which increases its ability to bind to the viral genome. Interacts with host karyopherin KPNA4; this interaction allows the nuclear import of the viral capsid protein. Interacts with spike glycoprotein E2. Interacts with host IRAK1; the interaction leads to inhibition of IRAK1-dependent signaling. The precursor of protein E3/E2 and E1 form a heterodimer shortly after synthesis. As to quaternary structure, the precursor of protein E3/E2 and E1 form a heterodimer shortly after synthesis. Processing of the precursor of protein E3/E2 into E2 and E3 results in a heterodimer of the spike glycoproteins E2 and E1. Spike at virion surface are constituted of three E2-E1 heterodimers. After target cell attachment and endocytosis, E1 change conformation to form homotrimers. Interacts with 6K protein. In terms of assembly, processing of the precursor of protein E3/E2 into E2 and E3 results in a heterodimer of the spike glycoproteins E2 and E1. Spike at virion surface are constituted of three E2-E1 heterodimers. Interacts with 6K protein. Interacts with spike glycoprotein E1. Interacts with spike glycoprotein E2. In terms of processing, structural polyprotein: Specific enzymatic cleavages in vivo yield mature proteins. Capsid protein is auto-cleaved during polyprotein translation, unmasking a signal peptide at the N-terminus of the precursor of E3/E2. The remaining polyprotein is then targeted to the host endoplasmic reticulum, where host signal peptidase cleaves it into pE2, 6K and E1 proteins. pE2 is further processed to mature E3 and E2 by host furin in trans-Golgi vesicle. Phosphorylated on serine and threonine residues. Post-translationally, palmitoylated via thioester bonds. These palmitoylations may induce disruption of the C-terminus transmembrane. This would result in the reorientation of E2 C-terminus from lumenal to cytoplasmic side. In terms of processing, N-glycosylated. Palmitoylated via thioester bonds.

Its subcellular location is the virion. It is found in the host cytoplasm. It localises to the host cell membrane. The protein localises to the host nucleus. The protein resides in the virion membrane. It carries out the reaction Autocatalytic release of the core protein from the N-terminus of the togavirus structural polyprotein by hydrolysis of a -Trp-|-Ser- bond.. In terms of biological role, forms an icosahedral capsid with a T=4 symmetry composed of 240 copies of the capsid protein surrounded by a lipid membrane through which penetrate 80 spikes composed of trimers of E1-E2 heterodimers. The capsid protein binds to the viral RNA genome at a site adjacent to a ribosome binding site for viral genome translation following genome release. Possesses a protease activity that results in its autocatalytic cleavage from the nascent structural protein. Following its self-cleavage, the capsid protein transiently associates with ribosomes, and within several minutes the protein binds to viral RNA and rapidly assembles into icosahedric core particles. The resulting nucleocapsid eventually associates with the cytoplasmic domain of the spike glycoprotein E2 at the cell membrane, leading to budding and formation of mature virions. In case of infection, new virions attach to target cells and after clathrin-mediated endocytosis their membrane fuses with the host endosomal membrane. This leads to the release of the nucleocapsid into the cytoplasm, followed by an uncoating event necessary for the genomic RNA to become accessible. The uncoating might be triggered by the interaction of capsid proteins with ribosomes. Binding of ribosomes would release the genomic RNA since the same region is genomic RNA-binding and ribosome-binding. Specifically inhibits interleukin-1 receptor-associated kinase 1/IRAK1-dependent signaling during viral entry, representing a means by which the alphaviruses may evade innate immune detection and activation prior to viral gene expression. Inhibits host transcription. Forms a tetrameric complex with XPO1/CRM1 and the nuclear import receptor importin. This complex blocks the central channel of host nuclear pores thereby inhibiting the receptor-mediated nuclear transport and thus the host mRNA and rRNA transcription. The inhibition of transcription is linked to a cytopathic effect on the host cell. Functionally, provides the signal sequence for the translocation of the precursor of protein E3/E2 to the host endoplasmic reticulum. Furin-cleaved E3 remains associated with spike glycoprotein E1 and mediates pH protection of the latter during the transport via the secretory pathway. After virion release from the host cell, the assembly protein E3 is gradually released in the extracellular space. Its function is as follows. Plays a role in viral attachment to target host cell, by binding to the cell receptor. Synthesized as a p62 precursor which is processed by furin at the cell membrane just before virion budding, giving rise to E2-E1 heterodimer. The p62-E1 heterodimer is stable, whereas E2-E1 is unstable and dissociate at low pH. p62 is processed at the last step, presumably to avoid E1 fusion activation before its final export to cell surface. E2 C-terminus contains a transitory transmembrane that would be disrupted by palmitoylation, resulting in reorientation of the C-terminal tail from lumenal to cytoplasmic side. This step is critical since E2 C-terminus is involved in budding by interacting with capsid proteins. This release of E2 C-terminus in cytoplasm occurs lately in protein export, and precludes premature assembly of particles at the endoplasmic reticulum membrane. Constitutive membrane protein involved in virus glycoprotein processing, cell permeabilization, and the budding of viral particles. Disrupts the calcium homeostasis of the cell, probably at the endoplasmic reticulum level. This leads to cytoplasmic calcium elevation. Because of its lipophilic properties, the 6K protein is postulated to influence the selection of lipids that interact with the transmembrane domains of the glycoproteins, which, in turn, affects the deformability of the bilayer required for the extreme curvature that occurs as budding proceeds. Present in low amount in virions, about 3% compared to viral glycoproteins. In terms of biological role, class II viral fusion protein. Fusion activity is inactive as long as E1 is bound to E2 in mature virion. After virus attachment to target cell and endocytosis, acidification of the endosome would induce dissociation of E1/E2 heterodimer and concomitant trimerization of the E1 subunits. This E1 trimer is fusion active, and promotes release of viral nucleocapsid in cytoplasm after endosome and viral membrane fusion. Efficient fusion requires the presence of cholesterol and sphingolipid in the target membrane. Fusion is optimal at levels of about 1 molecule of cholesterol per 2 molecules of phospholipids, and is specific for sterols containing a 3-beta-hydroxyl group. This Eastern equine encephalitis virus (strain va33[ten broeck]) (EEEV) protein is Structural polyprotein.